The chain runs to 311 residues: Malate dehydrogenase (311 aa).

NAD(+) is bound by residues 7-13 (GAAGGIG) and Asp34. Substrate contacts are provided by Arg81 and Arg87. Residues Asn94 and 117 to 119 (ITN) each bind NAD(+). 2 residues coordinate substrate: Asn119 and Arg153. His177 acts as the Proton acceptor in catalysis. Met227 is an NAD(+) binding site.

It belongs to the LDH/MDH superfamily. MDH type 1 family. In terms of assembly, homodimer.

It catalyses the reaction (S)-malate + NAD(+) = oxaloacetate + NADH + H(+). Functionally, catalyzes the reversible oxidation of malate to oxaloacetate. In Shewanella sp. (strain ANA-3), this protein is Malate dehydrogenase.